Here is a 664-residue protein sequence, read N- to C-terminus: Cyclic nucleotide-gated channel alpha-2 (664 aa).

Positions 1 to 10 (MMTEKSNGVK) are enriched in polar residues. The disordered stretch occupies residues 1 to 51 (MMTEKSNGVKSSPANNHNHHPPPSIKANGKDDHRAGSRPQSVAADDDTSPE). Over 1–146 (MMTEKSNGVK…PAGDWYYRWL (146 aa)) the chain is Cytoplasmic. Residues 147-168 (FVIAMPVLYNWCLLVARACFSD) form a helical membrane-spanning segment. Residues 169-178 (LQRNYFVVWL) lie on the Extracellular side of the membrane. The chain crosses the membrane as a helical span at residues 179–199 (VLDYFSDTVYIADLIIRLRTG). The Cytoplasmic segment spans residues 200-224 (FLEQGLLVKDPKKLRDNYIHTLQFK). The chain crosses the membrane as a helical span at residues 225–243 (LDVASIIPTDLIYFAVGIH). Over 244–248 (SPEVR) the chain is Extracellular. A helical membrane pass occupies residues 249-267 (FNRLLHFARMFEFFDRTET). Residues 268 to 274 (RTSYPNI) are Cytoplasmic-facing. Residues 272–380 (PNIFRISNLV…GNVGSMISNM (109 aa)) are ion conduction pathway. The helical transmembrane segment at 275–298 (FRISNLVLYILVIIHWNACIYYVI) threads the bilayer. Residues 299 to 321 (SKSIGFGVDTWVYPNITDPEYGY) are Extracellular-facing. Helical transmembrane passes span 322–356 (LARE…LFVI) and 357–381 (FDFL…SNMN). Residues 339–342 (TIGE) form a selectivity filter region. The interval 382 to 458 (ATRAEFQAKI…STLKKVRIFQ (77 aa)) is C-linker. The Cytoplasmic portion of the chain corresponds to 382–664 (ATRAEFQAKI…INTPEPTAAE (283 aa)). Positions 462–582 (AGLLVELVLK…EERGREILMK (121 aa)) are cyclic nucleotide-binding domain. 3',5'-cyclic GMP is bound by residues Gly522, Ser525, Arg538, and Thr539. 3',5'-cyclic AMP-binding residues include Arg538 and Thr539. A coiled-coil region spans residues 599-653 (VQEKLEQLETNMDTLYTRFARLLAEYTGAQQKLKQRITVLETKMKQNHEDDYLSD).

The protein belongs to the cyclic nucleotide-gated cation channel (TC 1.A.1.5) family. CNGA2 subfamily. As to quaternary structure, the olfactory cyclic nucleotide-gated channel is an heterotetramer composed of CNGA2, CNGA4 and CNGB1b subunits with 2:1:1 stoichiometry. In terms of tissue distribution, olfactory neurons. Widely expressed in brain, enriched in deep cerebellar nuclei, olfactory bulb mitral cells and cerebellar Purkinje neurons. Expressed in olfactory sensory cilia (at protein level).

Its subcellular location is the cell projection. The protein localises to the cilium membrane. The catalysed reaction is Ca(2+)(in) = Ca(2+)(out). The enzyme catalyses Na(+)(in) = Na(+)(out). It carries out the reaction K(+)(in) = K(+)(out). It catalyses the reaction NH4(+)(in) = NH4(+)(out). The catalysed reaction is Rb(+)(in) = Rb(+)(out). The enzyme catalyses Li(+)(in) = Li(+)(out). It carries out the reaction Cs(+)(in) = Cs(+)(out). Its activity is regulated as follows. The channel activity is inhibited by L-cis diltiazem. Its function is as follows. Pore-forming subunit of the olfactory cyclic nucleotide-gated channel. Operates in the cilia of olfactory sensory neurons where chemical stimulation of the odorant is converted to an electrical signal. Mediates odorant-induced cAMP-dependent Ca(2+) influx triggering neuron depolarization. The rise of intracellular Ca(2+) levels potentiates the olfactory response by activating Ca(2+)-dependent Cl(-) channels, but it also serves as a negative feedback signal to desensitize the channel for rapid adaptation to odorants. Conducts cAMP- and cGMP-gated ion currents, with permeability for monovalent and divalent cations. In Rattus norvegicus (Rat), this protein is Cyclic nucleotide-gated channel alpha-2.